Reading from the N-terminus, the 165-residue chain is Peptidyl-prolyl cis-trans isomerase-like 1 (165 aa).

The PPIase cyclophilin-type domain maps to 3–157; it reads EREEVILDTS…IVQKILYALN (155 aa).

This sequence belongs to the cyclophilin-type PPIase family. PPIL1 subfamily.

The enzyme catalyses [protein]-peptidylproline (omega=180) = [protein]-peptidylproline (omega=0). Its function is as follows. PPIases accelerate the folding of proteins. It catalyzes the cis-trans isomerization of proline imidic peptide bonds in oligopeptides. This chain is Peptidyl-prolyl cis-trans isomerase-like 1 (cyp3), found in Rhizopus delemar (strain RA 99-880 / ATCC MYA-4621 / FGSC 9543 / NRRL 43880) (Mucormycosis agent).